The chain runs to 414 residues: Small ribosomal subunit protein mS46 (414 aa).

A compositionally biased stretch (polar residues) spans 20-35 (LNAQQQQRPFSSTTTR). 2 disordered regions span residues 20–71 (LNAQ…EAAV) and 168–229 (AGPG…DAPP). 2 stretches are compositionally biased toward low complexity: residues 45-59 (PAAA…APGP) and 168-200 (AGPG…PFGA). Positions 205-224 (PAGDKKRSGGSGDKRPRGDD) are enriched in basic and acidic residues.

This sequence belongs to the mitochondrion-specific ribosomal protein mS46 family. In terms of assembly, component of the mitochondrial small ribosomal subunit (mt-SSU). Mature N.crassa 74S mitochondrial ribosomes consist of a small (37S) and a large (54S) subunit. The 37S small subunit contains a 16S ribosomal RNA (16S mt-rRNA) and 32 different proteins. The 54S large subunit contains a 23S rRNA (23S mt-rRNA) and 42 different proteins.

The protein resides in the mitochondrion. Functionally, component of the mitochondrial ribosome (mitoribosome), a dedicated translation machinery responsible for the synthesis of mitochondrial genome-encoded proteins, including at least some of the essential transmembrane subunits of the mitochondrial respiratory chain. The mitoribosomes are attached to the mitochondrial inner membrane and translation products are cotranslationally integrated into the membrane. This Neurospora crassa (strain ATCC 24698 / 74-OR23-1A / CBS 708.71 / DSM 1257 / FGSC 987) protein is Small ribosomal subunit protein mS46 (rsm28).